A 607-amino-acid chain; its full sequence is MTQTFDPSAFLATCSGRPGVYRMFDAEATLLYVGKAKNLKKRLASYFRKTGHAPKTGALVSRIAQIETTITGNETEALLLEQTLIKEWRPPYNILLRDDKSYPYVFLSDGNYPRLSIHRGAKKAKGRYFGPYPSAGAIRESLSLLQKTFQVRQCEDSYFKNRTRPCLQYQIKRCKGPCVGLVEPEVYAEDVRHSVMFLEGRSNALSDELNATMEKAAMALDFERAAELRDQVALLRRVQDQQSMDGATGDVDVVAAFVNPGGACVHLISVRGGRVLGSKNFFPQVGIEEEVGEVMSAFLAQYFLGGIDRELPGEVIVNVINDDFPAFVDAVEELRGVEMVISHRVRGTRARWQQMAVTNAEQALTARLANRQHVASRFEALAKVLGLEDPPMRLECYDISHSSGEATVASCVVFGPEGPIKSDYRRFNIEGVTAGDDYAAMHQALTRRYSRIKAGEGKLPDVLLVDGGKGQMSMARDVLNELQVPDLILLGVAKGTTRKAGFETLYLNDAAHEFTLPGDSPALHLIQQIRDEAHRFAITGHRARRGKTRRTSTLEGVAGVGPTRRRDLLKHFGGLQELSRASIDEIAKAPGISKKLAESIYANLHSE.

Residues 16–94 (GRPGVYRMFD…IKEWRPPYNI (79 aa)) enclose the GIY-YIG domain. Positions 203-238 (NALSDELNATMEKAAMALDFERAAELRDQVALLRRV) constitute a UVR domain.

Belongs to the UvrC family. As to quaternary structure, interacts with UvrB in an incision complex.

It localises to the cytoplasm. Its function is as follows. The UvrABC repair system catalyzes the recognition and processing of DNA lesions. UvrC both incises the 5' and 3' sides of the lesion. The N-terminal half is responsible for the 3' incision and the C-terminal half is responsible for the 5' incision. In Pseudomonas savastanoi pv. phaseolicola (strain 1448A / Race 6) (Pseudomonas syringae pv. phaseolicola (strain 1448A / Race 6)), this protein is UvrABC system protein C.